We begin with the raw amino-acid sequence, 200 residues long: Recombination protein RecR (200 aa).

The C4-type zinc-finger motif lies at 60-75; the sequence is CVYCQALTEDDVCNIC. A Toprim domain is found at 83–177; it reads TKLCIIESML…KISRIGFGVP (95 aa).

The protein belongs to the RecR family.

In terms of biological role, may play a role in DNA repair. It seems to be involved in an RecBC-independent recombinational process of DNA repair. It may act with RecF and RecO. This chain is Recombination protein RecR, found in Francisella tularensis subsp. novicida (strain U112).